A 167-amino-acid chain; its full sequence is Modulator of smoothened protein (167 aa).

The next 4 helical transmembrane spans lie at 7 to 29 (ISGC…PDWI), 68 to 88 (TLFF…LLVI), 101 to 121 (WIAF…PVGF), and 139 to 159 (VGSS…GLLF).

It is found in the cell projection. Its subcellular location is the cilium membrane. It localises to the cell membrane. Functionally, acts as a negative regulator of hedgehog signaling probably by promoting internalization and subsequent degradation of smoothened protein (SMO) present in the ciliary membrane. Plays a role in sonic hedgehog (SHH)-induced spinal neural progenitor cells differentiation. This Danio rerio (Zebrafish) protein is Modulator of smoothened protein.